A 377-amino-acid polypeptide reads, in one-letter code: DNA replication and repair protein RecF (377 aa).

30–37 serves as a coordination point for ATP; it reads GPNGQGKT.

Belongs to the RecF family.

It localises to the cytoplasm. Functionally, the RecF protein is involved in DNA metabolism; it is required for DNA replication and normal SOS inducibility. RecF binds preferentially to single-stranded, linear DNA. It also seems to bind ATP. This chain is DNA replication and repair protein RecF, found in Thermobifida fusca (strain YX).